The chain runs to 110 residues: NADH-quinone oxidoreductase subunit K (110 aa).

Helical transmembrane passes span 13–33 (VTHG…GIII), 38–58 (ILIL…NFLI), and 70–90 (VFVF…LAIV).

This sequence belongs to the complex I subunit 4L family. As to quaternary structure, NDH-1 is composed of 14 different subunits. Subunits NuoA, H, J, K, L, M, N constitute the membrane sector of the complex.

The protein resides in the cell inner membrane. The catalysed reaction is a quinone + NADH + 5 H(+)(in) = a quinol + NAD(+) + 4 H(+)(out). Its function is as follows. NDH-1 shuttles electrons from NADH, via FMN and iron-sulfur (Fe-S) centers, to quinones in the respiratory chain. The immediate electron acceptor for the enzyme in this species is believed to be ubiquinone. Couples the redox reaction to proton translocation (for every two electrons transferred, four hydrogen ions are translocated across the cytoplasmic membrane), and thus conserves the redox energy in a proton gradient. The polypeptide is NADH-quinone oxidoreductase subunit K (Francisella tularensis subsp. holarctica (strain FTNF002-00 / FTA)).